The chain runs to 301 residues: tRNA uridine(34) hydroxylase (301 aa).

The region spanning 120–214 is the Rhodanese domain; it reads SAPDVAVIDT…YLEDVPEDQS (95 aa). The active-site Cysteine persulfide intermediate is Cys174.

Belongs to the TrhO family.

It carries out the reaction uridine(34) in tRNA + AH2 + O2 = 5-hydroxyuridine(34) in tRNA + A + H2O. Its function is as follows. Catalyzes oxygen-dependent 5-hydroxyuridine (ho5U) modification at position 34 in tRNAs. In Jannaschia sp. (strain CCS1), this protein is tRNA uridine(34) hydroxylase.